We begin with the raw amino-acid sequence, 174 residues long: uncharacterized protein (174 aa).

The helical transmembrane segment at 126–146 threads the bilayer; sequence AIDEFIITVIPVVLGSGIPLF.

The protein to B.subtilis YyaP.

It localises to the membrane. This is an uncharacterized protein from Bacillus subtilis (strain 168).